Consider the following 82-residue polypeptide: Immediate early response 3-interacting protein 1 (82 aa).

Helical transmembrane passes span 2 to 22 and 62 to 82; these read AFTLYSLLQAALLCVNAIAVL and VMRVPLIIVNSIAIVLLLLFG.

The protein belongs to the YOS1 family.

It localises to the endoplasmic reticulum membrane. Regulator of endoplasmic reticulum secretion that acts as a key determinant of brain size. Required for secretion of extracellular matrix proteins. Required for correct brain development by depositing sufficient extracellular matrix proteins for tissue integrity and the proliferation of neural progenitors. Acts as a regulator of the unfolded protein response (UPR). The sequence is that of Immediate early response 3-interacting protein 1 from Bos taurus (Bovine).